Reading from the N-terminus, the 166-residue chain is Large ribosomal subunit protein mL49 (166 aa).

The segment at 56-78 (RIPDPPKHEHYPTPSGWQPPRDP) is disordered.

This sequence belongs to the mitochondrion-specific ribosomal protein mL49 family. In terms of assembly, interacts with OXA1L.

Its subcellular location is the mitochondrion. The protein is Large ribosomal subunit protein mL49 (MRPL49) of Macaca fascicularis (Crab-eating macaque).